The primary structure comprises 284 residues: MQPTLAPAPHPSMQTSAQDHADQVLHDQLLAAHQHLSHPQQPRPQPPAAQPPHMQPNTTSPRDQNNIDPAISGAAMLSGPPQTPPQPEPTGQESPKTYGKRPLSTSKRAAQNRAAQRAFRQRKESYIRKLEEQVKEFDTMSEAFKALQAENYQLREYIINLQSRLLESQGEVPELPGNIDLSQPRTDLNVPQPGAGPATTSSSAPAPPSGAQQAQPPQGAASNDDMNSLNRIAVAGLGMRKHPNEEANYLGNNFTGRRTRPDETQADSEVTKTEQAPHGLPMVS.

Residues 1–10 (MQPTLAPAPH) are compositionally biased toward pro residues. The disordered stretch occupies residues 1-121 (MQPTLAPAPH…NRAAQRAFRQ (121 aa)). Positions 26–40 (HDQLLAAHQHLSHPQ) are enriched in low complexity. Residues 41-54 (QPRPQPPAAQPPHM) are compositionally biased toward pro residues. The segment covering 57 to 67 (NTTSPRDQNNI) has biased composition (polar residues). The 64-residue stretch at 102 to 165 (PLSTSKRAAQ…EYIINLQSRL (64 aa)) folds into the bZIP domain. Residues 103-126 (LSTSKRAAQNRAAQRAFRQRKESY) are basic motif. Low complexity predominate over residues 108–118 (RAAQNRAAQRA). The tract at residues 130–161 (LEEQVKEFDTMSEAFKALQAENYQLREYIINL) is leucine-zipper. A disordered region spans residues 174 to 284 (ELPGNIDLSQ…QAPHGLPMVS (111 aa)). Positions 193–222 (PGAGPATTSSSAPAPPSGAQQAQPPQGAAS) are enriched in low complexity.

It belongs to the bZIP family.

The protein localises to the nucleus. Putative transcription factor. The chain is Putative transcription factor kapC (kapC) from Aspergillus oryzae (strain ATCC 42149 / RIB 40) (Yellow koji mold).